Here is an 89-residue protein sequence, read N- to C-terminus: Small ribosomal subunit protein uS15 (89 aa).

This sequence belongs to the universal ribosomal protein uS15 family. In terms of assembly, part of the 30S ribosomal subunit. Forms a bridge to the 50S subunit in the 70S ribosome, contacting the 23S rRNA.

Its function is as follows. One of the primary rRNA binding proteins, it binds directly to 16S rRNA where it helps nucleate assembly of the platform of the 30S subunit by binding and bridging several RNA helices of the 16S rRNA. Forms an intersubunit bridge (bridge B4) with the 23S rRNA of the 50S subunit in the ribosome. This Buchnera aphidicola subsp. Schizaphis graminum (strain Sg) protein is Small ribosomal subunit protein uS15.